A 1012-amino-acid chain; its full sequence is DNA polymerase gamma (1012 aa).

It belongs to the DNA polymerase type-A family. The cofactor is Mg(2+).

It localises to the mitochondrion. It carries out the reaction DNA(n) + a 2'-deoxyribonucleoside 5'-triphosphate = DNA(n+1) + diphosphate. Functionally, involved in the replication of mitochondrial DNA. The chain is DNA polymerase gamma (MIP1) from Komagataella pastoris (Yeast).